Consider the following 196-residue polypeptide: MAVSSCQSIMSNSMTNISSRSRVNQFTNIPSVYIPTLRRNVSLKVRSMAEGEPKEQSKVAVDPTTPTASTPTPQPAYTRPPKMSTKFSDLMAFSGPAPERINGRLAMIGFVAAMGVEIAKGQGLSEQLSGGGVAWFLGTSVLLSLASLIPFFQGVSVESKSKSIMSSDAEFWNGRIAMLGLVALAFTEFVKGTSLV.

The N-terminal 48 residues, 1-48 (MAVSSCQSIMSNSMTNISSRSRVNQFTNIPSVYIPTLRRNVSLKVRSM), are a transit peptide targeting the chloroplast. Over residues 47–57 (SMAEGEPKEQS) the composition is skewed to basic and acidic residues. The segment at 47–81 (SMAEGEPKEQSKVAVDPTTPTASTPTPQPAYTRPP) is disordered. 3 helical membrane-spanning segments follow: residues 105-125 (LAMI…QGLS), 132-152 (GVAW…IPFF), and 176-196 (IAML…TSLV).

This sequence belongs to the ELIP/psbS family.

Its subcellular location is the plastid. The protein localises to the chloroplast membrane. Its function is as follows. Probably involved in the integration of pigments into the mature pigment-protein complexes. The sequence is that of Early light-induced protein, chloroplastic from Pisum sativum (Garden pea).